The primary structure comprises 228 residues: Cytochrome c oxidase subunit 2 (228 aa).

The Mitochondrial intermembrane portion of the chain corresponds to 1 to 14 (MAYPLQLGFQDATS). A helical transmembrane segment spans residues 15–45 (PVMEELLHFHDHTLMIIFLISSLVLYIIMLM). At 46–59 (LTSKLVHTNMMNVQ) the chain is on the mitochondrial matrix side. The chain crosses the membrane as a helical span at residues 60 to 87 (EMEMIWTILPAIILILIALPSLHTLYMM). Residues 88 to 228 (DEINNPLLTI…FENWSASLAQ (141 aa)) are Mitochondrial intermembrane-facing. Cu cation contacts are provided by histidine 161, cysteine 196, glutamate 198, cysteine 200, histidine 204, and methionine 207. A Mg(2+)-binding site is contributed by glutamate 198. Phosphotyrosine is present on tyrosine 218.

This sequence belongs to the cytochrome c oxidase subunit 2 family. Component of the cytochrome c oxidase (complex IV, CIV), a multisubunit enzyme composed of 14 subunits. The complex is composed of a catalytic core of 3 subunits MT-CO1, MT-CO2 and MT-CO3, encoded in the mitochondrial DNA, and 11 supernumerary subunits COX4I, COX5A, COX5B, COX6A, COX6B, COX6C, COX7A, COX7B, COX7C, COX8 and NDUFA4, which are encoded in the nuclear genome. The complex exists as a monomer or a dimer and forms supercomplexes (SCs) in the inner mitochondrial membrane with NADH-ubiquinone oxidoreductase (complex I, CI) and ubiquinol-cytochrome c oxidoreductase (cytochrome b-c1 complex, complex III, CIII), resulting in different assemblies (supercomplex SCI(1)III(2)IV(1) and megacomplex MCI(2)III(2)IV(2)). Found in a complex with TMEM177, COA6, COX18, COX20, SCO1 and SCO2. Interacts with TMEM177 in a COX20-dependent manner. Interacts with COX20. Interacts with COX16. Cu cation serves as cofactor.

The protein resides in the mitochondrion inner membrane. The catalysed reaction is 4 Fe(II)-[cytochrome c] + O2 + 8 H(+)(in) = 4 Fe(III)-[cytochrome c] + 2 H2O + 4 H(+)(out). Its function is as follows. Component of the cytochrome c oxidase, the last enzyme in the mitochondrial electron transport chain which drives oxidative phosphorylation. The respiratory chain contains 3 multisubunit complexes succinate dehydrogenase (complex II, CII), ubiquinol-cytochrome c oxidoreductase (cytochrome b-c1 complex, complex III, CIII) and cytochrome c oxidase (complex IV, CIV), that cooperate to transfer electrons derived from NADH and succinate to molecular oxygen, creating an electrochemical gradient over the inner membrane that drives transmembrane transport and the ATP synthase. Cytochrome c oxidase is the component of the respiratory chain that catalyzes the reduction of oxygen to water. Electrons originating from reduced cytochrome c in the intermembrane space (IMS) are transferred via the dinuclear copper A center (CU(A)) of subunit 2 and heme A of subunit 1 to the active site in subunit 1, a binuclear center (BNC) formed by heme A3 and copper B (CU(B)). The BNC reduces molecular oxygen to 2 water molecules using 4 electrons from cytochrome c in the IMS and 4 protons from the mitochondrial matrix. The chain is Cytochrome c oxidase subunit 2 (MT-CO2) from Loxodonta africana (African elephant).